The chain runs to 356 residues: PEP-dependent dihydroxyacetone kinase, dihydroxyacetone-binding subunit DhaK (356 aa).

Positions aspartate 7–leucine 352 constitute a DhaK domain. Residues glycine 53 to histidine 56, lysine 104, and aspartate 109 contribute to the dihydroxyacetone site. The active-site Proton acceptor is histidine 56. Histidine 218 functions as the Tele-hemiaminal-histidine intermediate in the catalytic mechanism.

In terms of assembly, homodimer. The dihydroxyacetone kinase complex is composed of a homodimer of DhaM, a homodimer of DhaK and the subunit DhaL. DhaL also forms a complex with DhaR.

It carries out the reaction dihydroxyacetone + phosphoenolpyruvate = dihydroxyacetone phosphate + pyruvate. The protein operates within polyol metabolism; glycerol degradation. Inhibited by chloro-3-hydroxyacetone and D,L-glyceraldehyde. Its function is as follows. Dihydroxyacetone binding subunit of the dihydroxyacetone kinase, which is responsible for the phosphoenolpyruvate (PEP)-dependent phosphorylation of dihydroxyacetone via a phosphoryl group transfer from DhaL-ATP. Binds covalently dihydroxyacetone in hemiaminal linkage. DhaK also acts as corepressor of the transcription activator DhaR by binding to the sensor domain of DhaR. In the presence of dihydroxyacetone, DhaL-ADP displaces DhaK and stimulates DhaR activity. In the absence of dihydroxyacetone, DhaL-ADP is converted by the PTS to DhaL-ATP, which does not bind to DhaR. In Escherichia coli (strain K12), this protein is PEP-dependent dihydroxyacetone kinase, dihydroxyacetone-binding subunit DhaK.